A 268-amino-acid polypeptide reads, in one-letter code: Undecaprenyl-diphosphatase (268 aa).

The next 8 helical transmembrane spans lie at 4–24 (STTLVALVLGLLEGLTEFIPV), 50–70 (IQLGAVLAVLTVYAAKLVSVI), 84–104 (VAVLVAFLPAVVIGVLAHGFI), 109–129 (FETPILIATMLILGGIVLLFV), 144–164 (LPLNVALKIGFIQCLAMVPGV), 185–205 (AEFSFFLSMPTMAGAFAFDLF), 214–234 (SALGEIAVGFVAAFVAAVLVV), and 247–267 (ALFGWWRIAVGSVALAALLAG).

It belongs to the UppP family.

It localises to the cell inner membrane. It carries out the reaction di-trans,octa-cis-undecaprenyl diphosphate + H2O = di-trans,octa-cis-undecaprenyl phosphate + phosphate + H(+). Functionally, catalyzes the dephosphorylation of undecaprenyl diphosphate (UPP). Confers resistance to bacitracin. The polypeptide is Undecaprenyl-diphosphatase (Cereibacter sphaeroides (strain ATCC 17029 / ATH 2.4.9) (Rhodobacter sphaeroides)).